The sequence spans 354 residues: Protein RecA (354 aa).

67 to 74 (GPESSGKT) contributes to the ATP binding site.

It belongs to the RecA family.

The protein localises to the cytoplasm. Its function is as follows. Can catalyze the hydrolysis of ATP in the presence of single-stranded DNA, the ATP-dependent uptake of single-stranded DNA by duplex DNA, and the ATP-dependent hybridization of homologous single-stranded DNAs. It interacts with LexA causing its activation and leading to its autocatalytic cleavage. The sequence is that of Protein RecA from Serratia marcescens.